The sequence spans 210 residues: N-(5'-phosphoribosyl)anthranilate isomerase (210 aa).

Belongs to the TrpF family.

The catalysed reaction is N-(5-phospho-beta-D-ribosyl)anthranilate = 1-(2-carboxyphenylamino)-1-deoxy-D-ribulose 5-phosphate. It functions in the pathway amino-acid biosynthesis; L-tryptophan biosynthesis; L-tryptophan from chorismate: step 3/5. The chain is N-(5'-phosphoribosyl)anthranilate isomerase from Magnetococcus marinus (strain ATCC BAA-1437 / JCM 17883 / MC-1).